An 862-amino-acid chain; its full sequence is MLLGGLIDTLTGANKSARLKGTVVLMRKNVLDLNDFGATIIDGIGEFLGKGVTCQLISSTAVDQDNGGRGKVGAEAELEQWVTSLPSLTTGESKFGLTFDWEVEKLGVPGAIVVNNYHSSEFLLKTITLHDVPGRSGNLTFVANSWIYPAANYRYSRVFFANDTYLPSQMPAALKPYRDDELRNLRGDDQQGPYQEHDRIYRYDVYNDLGEGRPILGGNSDHPYPRRGRTERKPNASDPSLESRLSLLEQIYVPRDEKFGHLKTSDFLGYSIKAITQGILPAVRTYVDTTPGEFDSFQDIINLYEGGIKLPKVAALEELRKQFPLQLIKDLLPVGGDSLLKLPVPHIIQENKQAWRTDEEFAREVLAGVNPVMITRLTEFPPKSSLDPSKFGDHTSTITAEHIEKNLEGLTVQQALESNRLYILDHHDRFMPFLIDVNNLPGNFIYATRTLFFLRGDGRLTPLAIELSEPIIQGGLTTAKSKVYTPVPSGSVEGWVWELAKAYVAVNDSGWHQLVSHWLNTHAVMEPFVISTNRHLSVTHPVHKLLSPHYRDTMTINALARQTLINAGGIFEMTVFPGKFALGMSAVVYKDWKFTEQGLPDDLIKRGMAVEDPSSPYKVRLLVSDYPYAADGLAIWHAIEQYVSEYLAIYYPNDGVLQGDTEVQAWWKETREVGHGDLKDAPWWPKMQSVPELAKACTTIIWIGSALHAAVNFGQYPYAGFLPNRPTVSRRRMPEPGTEEYAELERDPERAFIHTITSQIQTIIGVSLLEVLSKHSSDELYLGQRDTPEWTSDPKALEVFKRFSDRLVEIESKVVGMNHDPELKNRNGPAKFPYMLLYPNTSDHKGAAAGLTAKGIPNSISI.

In terms of domain architecture, PLAT spans 34–161 (NDFGATIIDG…NYRYSRVFFA (128 aa)). Positions 164-862 (TYLPSQMPAA…AKGIPNSISI (699 aa)) constitute a Lipoxygenase domain. Residues 212-241 (GRPILGGNSDHPYPRRGRTERKPNASDPSL) are disordered. Fe cation is bound by residues His-517, His-522, His-708, Asn-712, and Ile-862.

The protein belongs to the lipoxygenase family. Monomer. Fe cation serves as cofactor.

The catalysed reaction is (9Z,12Z)-octadecadienoate + O2 = (9S)-hydroperoxy-(10E,12Z)-octadecadienoate. Its pathway is lipid metabolism; oxylipin biosynthesis. Functionally, plant lipoxygenase may be involved in a number of diverse aspects of plant physiology including growth and development, pest resistance, and senescence or responses to wounding. It catalyzes the hydroperoxidation of lipids containing a cis,cis-1,4-pentadiene structure. The protein is Linoleate 9S-lipoxygenase 1 (LOX1.1) of Hordeum vulgare (Barley).